A 480-amino-acid polypeptide reads, in one-letter code: ATP synthase subunit beta, chloroplastic (480 aa).

161 to 168 (GGAGVGKT) contributes to the ATP binding site.

It belongs to the ATPase alpha/beta chains family. F-type ATPases have 2 components, CF(1) - the catalytic core - and CF(0) - the membrane proton channel. CF(1) has five subunits: alpha(3), beta(3), gamma(1), delta(1), epsilon(1). CF(0) has four main subunits: a(1), b(1), b'(1) and c(9-12).

Its subcellular location is the plastid. It is found in the chloroplast thylakoid membrane. The catalysed reaction is ATP + H2O + 4 H(+)(in) = ADP + phosphate + 5 H(+)(out). Functionally, produces ATP from ADP in the presence of a proton gradient across the membrane. The catalytic sites are hosted primarily by the beta subunits. This chain is ATP synthase subunit beta, chloroplastic, found in Tetradesmus obliquus (Green alga).